A 214-amino-acid polypeptide reads, in one-letter code: MNQIFANPLSLPGTAQERVSRAVDSLRQGQGVIVVDDEDRENEGDLIFAAETLTAEQMSRMIRDGSGIVCLILTDPDLDRLALPPMVAHNTSRNGTGFTVSIEAREGVTTGVSAADRVTTIRAAIDPASTADDLARPGHVFPLRAHADGLSARRGHTEATIALMRLAGLRPAGVLCEVMNPDGTMARLPTLIGYGQAHGLPIVSIEDLVAVGAR.

D-ribulose 5-phosphate is bound by residues 40–41 (RE), Asp45, 153–157 (RRGHT), and Glu177. Residue Glu41 participates in Mg(2+) binding. His156 contributes to the Mg(2+) binding site.

It belongs to the DHBP synthase family. In terms of assembly, homodimer. The cofactor is Mg(2+). Mn(2+) serves as cofactor.

The enzyme catalyses D-ribulose 5-phosphate = (2S)-2-hydroxy-3-oxobutyl phosphate + formate + H(+). Its pathway is cofactor biosynthesis; riboflavin biosynthesis; 2-hydroxy-3-oxobutyl phosphate from D-ribulose 5-phosphate: step 1/1. Catalyzes the conversion of D-ribulose 5-phosphate to formate and 3,4-dihydroxy-2-butanone 4-phosphate. The sequence is that of 3,4-dihydroxy-2-butanone 4-phosphate synthase from Rhodospirillum rubrum (strain ATCC 11170 / ATH 1.1.1 / DSM 467 / LMG 4362 / NCIMB 8255 / S1).